We begin with the raw amino-acid sequence, 291 residues long: Inositol-1-monophosphatase (291 aa).

Residues Glu-83, Asp-104, Ile-106, and Asp-107 each contribute to the Mg(2+) site. Glu-83 contributes to the substrate binding site. Substrate-binding positions include 106 to 109 (IDGT), Arg-206, and Asp-235. Asp-235 contributes to the Mg(2+) binding site.

Belongs to the inositol monophosphatase superfamily. Requires Mg(2+) as cofactor.

It catalyses the reaction a myo-inositol phosphate + H2O = myo-inositol + phosphate. This Mycobacterium leprae (strain TN) protein is Inositol-1-monophosphatase (suhB).